Consider the following 325-residue polypeptide: GMP reductase (325 aa).

Cysteine 174 (thioimidate intermediate) is an active-site residue. 203-226 is an NADP(+) binding site; that stretch reads IIADGGLRTHGDIAKSIRFGATMV.

Belongs to the IMPDH/GMPR family. GuaC type 2 subfamily.

The enzyme catalyses IMP + NH4(+) + NADP(+) = GMP + NADPH + 2 H(+). Functionally, catalyzes the irreversible NADPH-dependent deamination of GMP to IMP. It functions in the conversion of nucleobase, nucleoside and nucleotide derivatives of G to A nucleotides, and in maintaining the intracellular balance of A and G nucleotides. The protein is GMP reductase of Staphylococcus epidermidis (strain ATCC 35984 / DSM 28319 / BCRC 17069 / CCUG 31568 / BM 3577 / RP62A).